Here is a 424-residue protein sequence, read N- to C-terminus: UDP-N-acetylglucosamine 1-carboxyvinyltransferase (424 aa).

Residue Lys-22–Asn-23 participates in phosphoenolpyruvate binding. Arg-95 lines the UDP-N-acetyl-alpha-D-glucosamine pocket. The active-site Proton donor is Cys-119. At Cys-119 the chain carries 2-(S-cysteinyl)pyruvic acid O-phosphothioketal. UDP-N-acetyl-alpha-D-glucosamine is bound by residues Arg-124–Gln-128, Asp-311, and Ile-333.

It belongs to the EPSP synthase family. MurA subfamily.

The protein resides in the cytoplasm. It carries out the reaction phosphoenolpyruvate + UDP-N-acetyl-alpha-D-glucosamine = UDP-N-acetyl-3-O-(1-carboxyvinyl)-alpha-D-glucosamine + phosphate. The protein operates within cell wall biogenesis; peptidoglycan biosynthesis. Its function is as follows. Cell wall formation. Adds enolpyruvyl to UDP-N-acetylglucosamine. The chain is UDP-N-acetylglucosamine 1-carboxyvinyltransferase from Polaromonas naphthalenivorans (strain CJ2).